The primary structure comprises 266 residues: Hydroxyethylthiazole kinase (266 aa).

M45 is a substrate binding site. ATP contacts are provided by R120 and T165. A192 lines the substrate pocket.

This sequence belongs to the Thz kinase family. The cofactor is Mg(2+).

It carries out the reaction 5-(2-hydroxyethyl)-4-methylthiazole + ATP = 4-methyl-5-(2-phosphooxyethyl)-thiazole + ADP + H(+). Its pathway is cofactor biosynthesis; thiamine diphosphate biosynthesis; 4-methyl-5-(2-phosphoethyl)-thiazole from 5-(2-hydroxyethyl)-4-methylthiazole: step 1/1. Catalyzes the phosphorylation of the hydroxyl group of 4-methyl-5-beta-hydroxyethylthiazole (THZ). The polypeptide is Hydroxyethylthiazole kinase (Psychrobacter sp. (strain PRwf-1)).